Consider the following 382-residue polypeptide: uncharacterized protein (382 aa).

The chain crosses the membrane as a helical span at residues 1-21 (MKIILVVFVLIFVGVIGFNMI).

This sequence belongs to the membrane fusion protein (MFP) (TC 8.A.1) family.

The protein resides in the membrane. This is an uncharacterized protein from Haemophilus influenzae (strain ATCC 51907 / DSM 11121 / KW20 / Rd).